The chain runs to 430 residues: Probable sulfoacetate transporter SauU (430 aa).

The next 10 membrane-spanning stretches (helical) occupy residues 47–67 (LGLVFSAFAYPYAAMQILGGW), 83–103 (LIWGVATVLTGFAGSVLILVV), 142–162 (FARLGGAITPPVVLVIVAAAG), 165–185 (EAFIVLGAVSLGWTLLYAFFF), 228–248 (WLVTFVDFCYGWSLWVYLTWL), 263–283 (LALFTALPLMAGVVGDTLGGV), 301–321 (AVLFVGLAGSLMFIAPMTFTA), 327–347 (VILLSLSFFFLELTNAVLWSL), 362–382 (MMNTGFGVAGMVSPVVFGYLI), and 390–410 (LPFMISGALLGVGALASLFIN).

Belongs to the major facilitator superfamily.

The protein localises to the cell membrane. Functionally, may transport sulfoacetate into the cell. This Cupriavidus necator (strain ATCC 17699 / DSM 428 / KCTC 22496 / NCIMB 10442 / H16 / Stanier 337) (Ralstonia eutropha) protein is Probable sulfoacetate transporter SauU (sauU).